We begin with the raw amino-acid sequence, 327 residues long: Prenyl transferase janC (327 aa).

The chain crosses the membrane as a helical span at residues 3–23 (FPGAGPILGAIAVSSCLYFLF). Lys63 and His96 together coordinate isopentenyl diphosphate. Positions 103 and 107 each coordinate Mg(2+). 2 residues coordinate dimethylallyl diphosphate: Arg112 and Lys196. The N-linked (GlcNAc...) asparagine glycan is linked to Asn211.

This sequence belongs to the FPP/GGPP synthase family.

The protein localises to the membrane. It functions in the pathway secondary metabolite biosynthesis. Functionally, prenyl transferase; part of the gene cluster that mediates the biosynthesis of the indole diterpenes janthitremanes such as shearinine K or shearinine A. The geranylgeranyl diphosphate (GGPP) synthase janG catalyzes the first step in janthitremane biosynthesis via conversion of farnesyl pyrophosphate and isopentyl pyrophosphate into geranylgeranyl pyrophosphate (GGPP). Condensation of indole-3-glycerol phosphate with GGPP by the prenyl transferase janC then forms 3-geranylgeranylindole (3-GGI). Epoxidation by the FAD-dependent monooxygenase janM leads to a epoxidized-GGI that is substrate of the terpene cyclase janB for cyclization to yield paspaline. Paspaline is subsequently converted to 13-desoxypaspaline by the cytochrome P450 monooxygenase janP, via beta-PC-M6 in a series of alpha-face oxidations. The cytochrome P450 monooxygenase janQ is proposed to carry out sequential beta-face oxidation steps at C-7 and C-13 of 13-desoxypaspaline to form paspalicine and paspalinine respectively. The indole diterpene prenyltransferase janD may then convert paspalinine into shearinine K which is substrate of janO and/or additional enzymes for oxidation and cyclization to generate shearinine A. In Penicillium janthinellum (Penicillium vitale), this protein is Prenyl transferase janC.